Reading from the N-terminus, the 102-residue chain is Large ribosomal subunit protein bL21 (102 aa).

The protein belongs to the bacterial ribosomal protein bL21 family. In terms of assembly, part of the 50S ribosomal subunit. Contacts protein L20.

Its function is as follows. This protein binds to 23S rRNA in the presence of protein L20. The sequence is that of Large ribosomal subunit protein bL21 from Syntrophotalea carbinolica (strain DSM 2380 / NBRC 103641 / GraBd1) (Pelobacter carbinolicus).